A 177-amino-acid chain; its full sequence is 3-hydroxydecanoyl-[acyl-carrier-protein] dehydratase (177 aa).

Residue His-76 is part of the active site.

This sequence belongs to the thioester dehydratase family. FabA subfamily. As to quaternary structure, homodimer.

The protein localises to the cytoplasm. The enzyme catalyses a (3R)-hydroxyacyl-[ACP] = a (2E)-enoyl-[ACP] + H2O. It carries out the reaction (3R)-hydroxydecanoyl-[ACP] = (2E)-decenoyl-[ACP] + H2O. The catalysed reaction is (2E)-decenoyl-[ACP] = (3Z)-decenoyl-[ACP]. The protein operates within lipid metabolism; fatty acid biosynthesis. Its function is as follows. Necessary for the introduction of cis unsaturation into fatty acids. Catalyzes the dehydration of (3R)-3-hydroxydecanoyl-ACP to E-(2)-decenoyl-ACP and then its isomerization to Z-(3)-decenoyl-ACP. Can catalyze the dehydratase reaction for beta-hydroxyacyl-ACPs with saturated chain lengths up to 16:0, being most active on intermediate chain length. This chain is 3-hydroxydecanoyl-[acyl-carrier-protein] dehydratase, found in Haemophilus influenzae (strain PittGG).